Reading from the N-terminus, the 238-residue chain is MSNSWFQFKQFTVQQDKTAMKVCTDSCVFGATVPVTTSTYTILDIGTGTGLLALMLAQRSNADIDAVELNKDAAQQATDNFFNSPWNERLHVHTCSIQDYFKFTTKQYDLIVCNPPFFSASLKTGNTSKDMALHQSHLLIDELIQVVSFMLKQSGDAYLLISIYEEVNFFQAANRVGLNVKRFQEMYDNETKLIRYVLHLRKDTEHMDHETQNFIIRSADKQYTAQFVEVLRAFYLNL.

Belongs to the methyltransferase superfamily. tRNA (adenine-N(6)-)-methyltransferase family.

The protein localises to the cytoplasm. The catalysed reaction is adenosine(37) in tRNA1(Val) + S-adenosyl-L-methionine = N(6)-methyladenosine(37) in tRNA1(Val) + S-adenosyl-L-homocysteine + H(+). Specifically methylates the adenine in position 37 of tRNA(1)(Val) (anticodon cmo5UAC). The chain is tRNA1(Val) (adenine(37)-N6)-methyltransferase from Cytophaga hutchinsonii (strain ATCC 33406 / DSM 1761 / CIP 103989 / NBRC 15051 / NCIMB 9469 / D465).